Here is an 83-residue protein sequence, read N- to C-terminus: Kunitz-type serine protease inhibitor textilinin-4 (83 aa).

Positions methionine 1 to serine 24 are cleaved as a signal peptide. The 51-residue stretch at cysteine 31–cysteine 81 folds into the BPTI/Kunitz inhibitor domain. Disulfide bonds link cysteine 31–cysteine 81, cysteine 40–cysteine 64, and cysteine 56–cysteine 77.

The protein belongs to the venom Kunitz-type family. As to expression, expressed by the venom gland.

Its subcellular location is the secreted. In terms of biological role, serine protease inhibitor. Does not inhibit plasmin, and does not reduce blood loss in the mouse tail vein blood loss model. This Pseudonaja textilis textilis (Eastern brown snake) protein is Kunitz-type serine protease inhibitor textilinin-4.